The primary structure comprises 432 residues: Tol-Pal system protein TolB (432 aa).

The N-terminal stretch at 1–21 is a signal peptide; sequence MKHVRIFATLLALLVISVTPA.

Belongs to the TolB family. In terms of assembly, the Tol-Pal system is composed of five core proteins: the inner membrane proteins TolA, TolQ and TolR, the periplasmic protein TolB and the outer membrane protein Pal. They form a network linking the inner and outer membranes and the peptidoglycan layer.

Its subcellular location is the periplasm. Functionally, part of the Tol-Pal system, which plays a role in outer membrane invagination during cell division and is important for maintaining outer membrane integrity. The polypeptide is Tol-Pal system protein TolB (Geobacter sulfurreducens (strain ATCC 51573 / DSM 12127 / PCA)).